Here is a 748-residue protein sequence, read N- to C-terminus: Tyrosine--tRNA ligase 2, cytoplasmic (748 aa).

M1 is subject to N-acetylmethionine. The short motif at 441 to 449 is the 'HIGH' region element; it reads PSGRMHIAQ. Residues Y564, Q568, D571, and Q586 each coordinate L-tyrosine. The short motif at 623 to 627 is the 'KMSKS' region element; it reads KMSKS. K626 contributes to the ATP binding site.

Belongs to the class-I aminoacyl-tRNA synthetase family.

It is found in the cytoplasm. The protein localises to the cytosol. It catalyses the reaction tRNA(Tyr) + L-tyrosine + ATP = L-tyrosyl-tRNA(Tyr) + AMP + diphosphate + H(+). Catalyzes the attachment of tyrosine to tRNA(Tyr) in a two-step reaction: tyrosine is first activated by ATP to form Tyr-AMP and then transferred to the acceptor end of tRNA(Tyr). The polypeptide is Tyrosine--tRNA ligase 2, cytoplasmic (Arabidopsis thaliana (Mouse-ear cress)).